The chain runs to 275 residues: UBX domain-containing protein 8 (275 aa).

A topological domain (cytoplasmic) is located at residue Met-1. A helical membrane pass occupies residues 2–22; it reads ASRGVVGIFLLSALPLLCLEL. Topologically, residues 23–33 are lumenal; the sequence is RRGKPDLGIKD. A helical membrane pass occupies residues 34 to 54; it reads LILLCGRIFLLLALLTLIISV. Residues 55–275 lie on the Cytoplasmic side of the membrane; it reads TTSWVNSFKP…LNVEEKEQSS (221 aa). Positions 137 to 181 are disordered; the sequence is DEDLELDSESQTSFETSNREAAKRRNLPNSVTNISPPAEQPTKKE. The UBX domain maps to 192–268; the sequence is TAEEVVTVAL…GITVDTVLNV (77 aa).

In terms of assembly, interacts with SYVN1 and VCP.

It localises to the endoplasmic reticulum membrane. Functionally, involved in endoplasmic reticulum-associated degradation (ERAD) for misfolded lumenal proteins, possibly by tethering VCP to the endoplasmic reticulum membrane. May play a role in reproduction. May play a role in reproduction. The polypeptide is UBX domain-containing protein 8 (UBXN8) (Bos taurus (Bovine)).